The primary structure comprises 257 residues: Large ribosomal subunit protein eL8z (257 aa).

It belongs to the eukaryotic ribosomal protein eL8 family.

The chain is Large ribosomal subunit protein eL8z (RPL7AA) from Arabidopsis thaliana (Mouse-ear cress).